A 217-amino-acid polypeptide reads, in one-letter code: Imidazole glycerol phosphate synthase subunit HisH (217 aa).

A Glutamine amidotransferase type-1 domain is found at 1-212 (MLAILDYKAG…YEYCRQSRQE (212 aa)). Cysteine 79 functions as the Nucleophile in the catalytic mechanism. Active-site residues include histidine 187 and glutamate 189.

Heterodimer of HisH and HisF.

The protein resides in the cytoplasm. It catalyses the reaction 5-[(5-phospho-1-deoxy-D-ribulos-1-ylimino)methylamino]-1-(5-phospho-beta-D-ribosyl)imidazole-4-carboxamide + L-glutamine = D-erythro-1-(imidazol-4-yl)glycerol 3-phosphate + 5-amino-1-(5-phospho-beta-D-ribosyl)imidazole-4-carboxamide + L-glutamate + H(+). The catalysed reaction is L-glutamine + H2O = L-glutamate + NH4(+). It functions in the pathway amino-acid biosynthesis; L-histidine biosynthesis; L-histidine from 5-phospho-alpha-D-ribose 1-diphosphate: step 5/9. In terms of biological role, IGPS catalyzes the conversion of PRFAR and glutamine to IGP, AICAR and glutamate. The HisH subunit catalyzes the hydrolysis of glutamine to glutamate and ammonia as part of the synthesis of IGP and AICAR. The resulting ammonia molecule is channeled to the active site of HisF. This Desulfovibrio desulfuricans (strain ATCC 27774 / DSM 6949 / MB) protein is Imidazole glycerol phosphate synthase subunit HisH.